The following is an 89-amino-acid chain: Large ribosomal subunit protein bL28 (89 aa).

This sequence belongs to the bacterial ribosomal protein bL28 family.

In Chlamydia pneumoniae (Chlamydophila pneumoniae), this protein is Large ribosomal subunit protein bL28.